The sequence spans 707 residues: Acetyl-coenzyme A synthetase 1 (707 aa).

CoA-binding positions include 242–245 (RGGK) and Thr361. ATP contacts are provided by residues 437-439 (GEP), 461-466 (DTYWQT), Asp553, and Arg568. Ser576 provides a ligand contact to CoA. ATP is bound at residue Arg579. Arg644 contacts CoA. Residues 705-707 (VKL) carry the Microbody targeting signal motif.

Belongs to the ATP-dependent AMP-binding enzyme family.

The protein localises to the microsome. It localises to the endoplasmic reticulum. The enzyme catalyses acetate + ATP + CoA = acetyl-CoA + AMP + diphosphate. In terms of biological role, may be required for assimilation of ethanol and acetate. The sequence is that of Acetyl-coenzyme A synthetase 1 (ACS1) from Kluyveromyces lactis (strain ATCC 8585 / CBS 2359 / DSM 70799 / NBRC 1267 / NRRL Y-1140 / WM37) (Yeast).